Here is a 510-residue protein sequence, read N- to C-terminus: Inositol-3-phosphate synthase (510 aa).

24 residues coordinate NAD(+): Gly70, Gly71, Asn72, Asn73, Asp143, Ile180, Gln190, Arg193, Thr230, Ala231, Asn232, Thr233, Gly281, Ser282, Asp306, Ser309, Asn340, Asn341, Asp342, Lys355, Gly393, Asp394, Asp422, and Ser423.

Belongs to the myo-inositol 1-phosphate synthase family. NAD(+) serves as cofactor.

The protein localises to the cytoplasm. Its subcellular location is the cytosol. It is found in the nucleus. The enzyme catalyses D-glucose 6-phosphate = 1D-myo-inositol 3-phosphate. It functions in the pathway polyol metabolism; myo-inositol biosynthesis; myo-inositol from D-glucose 6-phosphate: step 1/2. Its function is as follows. Key enzyme in myo-inositol biosynthesis pathway that catalyzes the conversion of glucose 6-phosphate to 1-myo-inositol 1-phosphate in a NAD-dependent manner. This chain is Inositol-3-phosphate synthase (INPS1), found in Nicotiana paniculata.